A 367-amino-acid polypeptide reads, in one-letter code: Viral cathepsin (367 aa).

The N-terminal stretch at 1–25 (MRKYHSNIMHKIITFVSLLWTFVVC) is a signal peptide. A propeptide spans 26 to 156 (DEISLHTSSS…IVKGAPDIRL (131 aa)) (activation peptide). Residues N103 and N135 are each glycosylated (N-linked (GlcNAc...) asparagine; by host). 3 disulfides stabilise this stretch: C177–C218, C211–C251, and C306–C354. C180 is an active-site residue. Catalysis depends on residues H313 and N333.

This sequence belongs to the peptidase C1 family. Synthesized as an inactive proenzyme and activated by proteolytic removal of the inhibitory propeptide.

The catalysed reaction is Endopeptidase of broad specificity, hydrolyzing substrates of both cathepsin L and cathepsin B.. Its function is as follows. Cysteine protease that plays an essential role in host liquefaction to facilitate horizontal transmission of the virus. May participate in the degradation of foreign protein expressed by the baculovirus system. In Lepidoptera (butterflies and moths), this protein is Viral cathepsin (VCATH).